The primary structure comprises 2103 residues: Zinc finger SWIM domain-containing protein 8 homolog (2103 aa).

The segment at 191 to 227 (FNVAVTFDRRRISSCNCTCTSSAYWCSHVVAVCLHRI) adopts an SWIM-type zinc-finger fold. Disordered regions lie at residues 684-860 (DGNR…GSTA), 1237-1262 (SSNP…GGSG), 1310-1399 (SSGS…IPNQ), 1735-1772 (MQMF…QVVQ), 1786-1864 (QQVQ…GVGV), and 1888-1916 (PFMQ…RQPH). Polar residues predominate over residues 724-740 (SALTESDSQSSFDAVSH). Low complexity-rich tracts occupy residues 754–789 (AVGV…STSS) and 835–857 (GRVA…VGSG). The segment covering 1237–1249 (SSNPPVRTRSNQP) has biased composition (polar residues). Residues 1320–1351 (GMVPTTNAAGTTGTPSSSSTTVSGSQNPNGNP) are compositionally biased toward low complexity. Over residues 1352–1377 (SGSGGGGNGGGGNGGGGGGGGGGGGS) the composition is skewed to gly residues. The segment covering 1755 to 1764 (QPPPQQPPNP) has biased composition (pro residues). 2 stretches are compositionally biased toward low complexity: residues 1786–1813 (QQVQ…SGFQ) and 1820–1835 (AFQA…MQAG). Pro residues-rich tracts occupy residues 1836–1859 (PPGP…PNGP) and 1894–1908 (PPQP…PSQP).

The protein belongs to the ZSWIM8 family. In terms of assembly, component of the SCF-like E3 ubiquitin-protein ligase complex.

It functions in the pathway protein modification; protein ubiquitination. Its function is as follows. Substrate recognition component of a SCF-like E3 ubiquitin-protein ligase complex that promotes target-directed microRNA degradation (TDMD), a process that mediates degradation of microRNAs (miRNAs). The SCF-like E3 ubiquitin-protein ligase complex acts by catalyzing ubiquitination and subsequent degradation of AGO1, thereby exposing miRNAs for degradation. The protein is Zinc finger SWIM domain-containing protein 8 homolog of Drosophila melanogaster (Fruit fly).